The chain runs to 287 residues: Lectin 10 (287 aa).

The Cytoplasmic segment spans residues 1–11; it reads MALSNLKSNRT. Residues 12–31 form a helical membrane-spanning segment; it reads LSSSLITIFIISLFLQYHNI. Topologically, residues 32–287 are extracellular; that stretch reads KSQSSWQSRQ…IINWSFESAL (256 aa). N-linked (GlcNAc...) asparagine glycosylation is found at Asn124, Asn147, Asn243, and Asn280.

Belongs to the leguminous lectin family.

The protein resides in the membrane. Its function is as follows. May be involved in arbuscular mycorrhizal (AM) symbiosis with AM fungi. The polypeptide is Lectin 10 (Medicago truncatula (Barrel medic)).